The primary structure comprises 97 residues: Kininogen-1 (97 aa).

The signal sequence occupies residues 1 to 23 (MRLWFCLSFLIILCVEHFPGTLA).

The protein belongs to the bradykinin-related peptide family. As to expression, expressed by the skin glands.

The protein resides in the secreted. In terms of biological role, [Ala3,Thr6]bradykinin: produces in vitro relaxation of rat arterial smooth muscle and constriction of intestinal smooth muscle. Possesses insulin-releasing activity. May target bradykinin receptors (BDKRB). The chain is Kininogen-1 from Bombina variegata (Yellow-bellied toad).